The following is a 620-amino-acid chain: Chaperone protein HscA homolog (620 aa).

It belongs to the heat shock protein 70 family.

Chaperone involved in the maturation of iron-sulfur cluster-containing proteins. Has a low intrinsic ATPase activity which is markedly stimulated by HscB. In Acinetobacter baumannii (strain SDF), this protein is Chaperone protein HscA homolog.